A 279-amino-acid polypeptide reads, in one-letter code: Pleckstrin homology domain-containing family F member 1 (279 aa).

One can recognise a PH domain in the interval 35 to 131 (VLLGEGVLTK…WISHIEECVR (97 aa)). The FYVE-type zinc finger occupies 152 to 212 (DKATDICMRC…VCSLCYRELA (61 aa)). Residues C158, C161, C175, C178, C183, C186, C204, and C207 each coordinate Zn(2+). The interval 220–263 (AREGIGGSPPQLSHLGGTVCGASSGDDDDSDEDREGNGDGDWPT) is disordered. The span at 244–253 (GDDDDSDEDR) shows a compositional bias: acidic residues.

As to expression, widely expressed.

It is found in the nucleus. Its subcellular location is the cytoplasm. The protein resides in the perinuclear region. The protein localises to the lysosome. Functionally, may induce apoptosis through the lysosomal-mitochondrial pathway. Translocates to the lysosome initiating the permeabilization of lysosomal membrane (LMP) and resulting in the release of CTSD and CTSL to the cytoplasm. Triggers the caspase-independent apoptosis by altering mitochondrial membrane permeabilization (MMP) resulting in the release of PDCD8. The polypeptide is Pleckstrin homology domain-containing family F member 1 (Plekhf1) (Mus musculus (Mouse)).